Consider the following 513-residue polypeptide: Probable DNA ligase (513 aa).

Glu213 provides a ligand contact to ATP. Lys215 (N6-AMP-lysine intermediate) is an active-site residue. ATP contacts are provided by Arg220, Arg235, Glu264, Phe304, Arg376, and Lys382.

This sequence belongs to the ATP-dependent DNA ligase family. Mg(2+) is required as a cofactor.

It carries out the reaction ATP + (deoxyribonucleotide)n-3'-hydroxyl + 5'-phospho-(deoxyribonucleotide)m = (deoxyribonucleotide)n+m + AMP + diphosphate.. Its function is as follows. DNA ligase that seals nicks in double-stranded DNA during DNA replication, DNA recombination and DNA repair. This Anaeromyxobacter dehalogenans (strain 2CP-C) protein is Probable DNA ligase.